The primary structure comprises 676 residues: Urocanate hydratase (676 aa).

NAD(+) contacts are provided by residues 126–127 (GG), Q204, 251–253 (GMS), E271, 317–318 (NV), 343–347 (QTSCH), 354–355 (YY), and Y403. The residue at position 534 (K534) is an N6-succinyllysine. G594 provides a ligand contact to NAD(+).

It belongs to the urocanase family. The cofactor is NAD(+).

The enzyme catalyses 4-imidazolone-5-propanoate = trans-urocanate + H2O. It participates in amino-acid degradation; L-histidine degradation into L-glutamate; N-formimidoyl-L-glutamate from L-histidine: step 2/3. The protein is Urocanate hydratase (Uroc1) of Mus musculus (Mouse).